The primary structure comprises 163 residues: ATP synthase subunit b', chloroplastic (163 aa).

The helical transmembrane segment at 26 to 46 threads the bilayer; the sequence is ATLPLMALQFILLTVILTFVF.

This sequence belongs to the ATPase B chain family. F-type ATPases have 2 components, F(1) - the catalytic core - and F(0) - the membrane proton channel. F(1) has five subunits: alpha(3), beta(3), gamma(1), delta(1), epsilon(1). F(0) has four main subunits: a(1), b(1), b'(1) and c(10-14). The alpha and beta chains form an alternating ring which encloses part of the gamma chain. F(1) is attached to F(0) by a central stalk formed by the gamma and epsilon chains, while a peripheral stalk is formed by the delta, b and b' chains.

It localises to the plastid. It is found in the chloroplast thylakoid membrane. F(1)F(0) ATP synthase produces ATP from ADP in the presence of a proton or sodium gradient. F-type ATPases consist of two structural domains, F(1) containing the extramembraneous catalytic core and F(0) containing the membrane proton channel, linked together by a central stalk and a peripheral stalk. During catalysis, ATP synthesis in the catalytic domain of F(1) is coupled via a rotary mechanism of the central stalk subunits to proton translocation. In terms of biological role, component of the F(0) channel, it forms part of the peripheral stalk, linking F(1) to F(0). The b'-subunit is a diverged and duplicated form of b found in plants and photosynthetic bacteria. The sequence is that of ATP synthase subunit b', chloroplastic from Ochrosphaera neapolitana.